The following is a 421-amino-acid chain: D-aspartate ligase (421 aa).

The ATP-grasp domain maps to 130–332 (YEVCEEYDLP…LARFVTEDRV (203 aa)). 161–224 (PFEFPVALKP…QDFIPGDDSN (64 aa)) lines the ATP pocket. Aspartate 290, glutamate 304, and asparagine 306 together coordinate Mg(2+).

Mg(2+) serves as cofactor.

The catalysed reaction is [beta-GlcNAc-(1-&gt;4)-Mur2Ac(oyl-L-Ala-gamma-D-Glu-L-Lys-D-Ala-D-Ala)](n) + n D-aspartate + n ATP = [beta-GlcNAc-(1-&gt;4)-Mur2Ac(oyl-L-Ala-gamma-D-Glu-6-N-(beta-D-Asp)-L-Lys-D-Ala-D-Ala)]n + n ADP + n phosphate + n H(+). It functions in the pathway cell wall biogenesis; peptidoglycan biosynthesis. Catalyzes the addition of D-aspartate onto the lysine residue in the peptidoglycan precursor UDP-MurNAc-pentapeptide. The ligation occurs between the beta-carboxylate of D-Asp and the epsilon-amino group of L-Lys. Is highly specific for D-aspartate, as L-aspartate, D-glutamate, D-alanine, D-iso-asparagine and D-malate are not substrates. The protein is D-aspartate ligase of Enterococcus faecium (strain Aus0004).